The sequence spans 483 residues: Linamarin synthase 1 (483 aa).

The active-site Proton acceptor is the histidine 22. Histidine 22 provides a ligand contact to an anthocyanidin. Aspartate 124 (charge relay) is an active-site residue. Residues threonine 146, valine 360, glutamine 362, histidine 377, tryptophan 380, asparagine 381, serine 382, and glutamate 385 each contribute to the UDP-alpha-D-glucose site. Alanine 400 serves as a coordination point for an anthocyanidin. Glutamate 401 and glutamine 402 together coordinate UDP-alpha-D-glucose.

It belongs to the UDP-glycosyltransferase family. In terms of tissue distribution, expressed in the cortex, xylem and phloem parenchyma, and in specific cells in the endodermis of the petiole of the first unfolded leaf.

The enzyme catalyses 2-hydroxy-2-methylpropanenitrile + UDP-alpha-D-glucose = linamarin + UDP + H(+). Functionally, UDP-glucosyltransferase catalyzing in planta synthesis of cyanogenic glucosides. Able to glucosylate acetone cyanohydrin and 2-hydroxy-2-methylbutyronitrile, forming linamarin and lotaustralin. Also accepts, to some extent, a wide range of potential acceptor substrates, including simple alcohols, flavonoids, isoflavonoids and other hydroxynitriles such as p-hydroxymandelonitrile, mandelonitrile, (E)-4-hydroxy-2-methylbut-2-enenitrile and (E)- 2-(hydroxymethyl)but-2-enenitrile. The sequence is that of Linamarin synthase 1 from Manihot esculenta (Cassava).